Here is a 526-residue protein sequence, read N- to C-terminus: Light-independent protochlorophyllide reductase subunit B (526 aa).

Asp-36 provides a ligand contact to [4Fe-4S] cluster. Residue Asp-284 is the Proton donor of the active site. Gly-419 to Leu-420 contributes to the substrate binding site.

It belongs to the ChlB/BchB/BchZ family. As to quaternary structure, protochlorophyllide reductase is composed of three subunits; BchL, BchN and BchB. Forms a heterotetramer of two BchB and two BchN subunits. Requires [4Fe-4S] cluster as cofactor.

The enzyme catalyses chlorophyllide a + oxidized 2[4Fe-4S]-[ferredoxin] + 2 ADP + 2 phosphate = protochlorophyllide a + reduced 2[4Fe-4S]-[ferredoxin] + 2 ATP + 2 H2O. Its pathway is porphyrin-containing compound metabolism; bacteriochlorophyll biosynthesis (light-independent). Its function is as follows. Component of the dark-operative protochlorophyllide reductase (DPOR) that uses Mg-ATP and reduced ferredoxin to reduce ring D of protochlorophyllide (Pchlide) to form chlorophyllide a (Chlide). This reaction is light-independent. The NB-protein (BchN-BchB) is the catalytic component of the complex. The chain is Light-independent protochlorophyllide reductase subunit B from Halorhodospira halophila (strain DSM 244 / SL1) (Ectothiorhodospira halophila (strain DSM 244 / SL1)).